The chain runs to 128 residues: Large ribosomal subunit protein uL22 (128 aa).

It belongs to the universal ribosomal protein uL22 family. As to quaternary structure, part of the 50S ribosomal subunit.

In terms of biological role, this protein binds specifically to 23S rRNA; its binding is stimulated by other ribosomal proteins, e.g. L4, L17, and L20. It is important during the early stages of 50S assembly. It makes multiple contacts with different domains of the 23S rRNA in the assembled 50S subunit and ribosome. Functionally, the globular domain of the protein is located near the polypeptide exit tunnel on the outside of the subunit, while an extended beta-hairpin is found that lines the wall of the exit tunnel in the center of the 70S ribosome. The protein is Large ribosomal subunit protein uL22 of Prochlorococcus marinus (strain AS9601).